The primary structure comprises 149 residues: Large ribosomal subunit protein uL24 (149 aa).

It belongs to the universal ribosomal protein uL24 family. In terms of assembly, part of the 50S ribosomal subunit.

In terms of biological role, one of two assembly initiator proteins, it binds directly to the 5'-end of the 23S rRNA, where it nucleates assembly of the 50S subunit. One of the proteins that surrounds the polypeptide exit tunnel on the outside of the subunit. The chain is Large ribosomal subunit protein uL24 from Nostoc sp. (strain PCC 7120 / SAG 25.82 / UTEX 2576).